The sequence spans 488 residues: Glutamyl-tRNA(Gln) amidotransferase subunit A (488 aa).

Residues Lys-77 and Ser-152 each act as charge relay system in the active site. Ser-176 functions as the Acyl-ester intermediate in the catalytic mechanism.

It belongs to the amidase family. GatA subfamily. As to quaternary structure, heterotrimer of A, B and C subunits.

It catalyses the reaction L-glutamyl-tRNA(Gln) + L-glutamine + ATP + H2O = L-glutaminyl-tRNA(Gln) + L-glutamate + ADP + phosphate + H(+). Functionally, allows the formation of correctly charged Gln-tRNA(Gln) through the transamidation of misacylated Glu-tRNA(Gln) in organisms which lack glutaminyl-tRNA synthetase. The reaction takes place in the presence of glutamine and ATP through an activated gamma-phospho-Glu-tRNA(Gln). In Streptococcus pyogenes serotype M12 (strain MGAS2096), this protein is Glutamyl-tRNA(Gln) amidotransferase subunit A.